We begin with the raw amino-acid sequence, 588 residues long: 2-succinyl-5-enolpyruvyl-6-hydroxy-3-cyclohexene-1-carboxylate synthase (588 aa).

This sequence belongs to the TPP enzyme family. MenD subfamily. Homodimer. It depends on Mg(2+) as a cofactor. Mn(2+) serves as cofactor. Thiamine diphosphate is required as a cofactor.

It catalyses the reaction isochorismate + 2-oxoglutarate + H(+) = 5-enolpyruvoyl-6-hydroxy-2-succinyl-cyclohex-3-ene-1-carboxylate + CO2. It participates in quinol/quinone metabolism; 1,4-dihydroxy-2-naphthoate biosynthesis; 1,4-dihydroxy-2-naphthoate from chorismate: step 2/7. The protein operates within cofactor biosynthesis; phylloquinone biosynthesis. In terms of biological role, catalyzes the thiamine diphosphate-dependent decarboxylation of 2-oxoglutarate and the subsequent addition of the resulting succinic semialdehyde-thiamine pyrophosphate anion to isochorismate to yield 2-succinyl-5-enolpyruvyl-6-hydroxy-3-cyclohexene-1-carboxylate (SEPHCHC). This Prochlorococcus marinus (strain MIT 9515) protein is 2-succinyl-5-enolpyruvyl-6-hydroxy-3-cyclohexene-1-carboxylate synthase.